The chain runs to 127 residues: Fluoride-specific ion channel FluC 1 (127 aa).

The next 3 helical transmembrane spans lie at 6–26 (PLVTVETIVLVGLGGFAGSNL), 29–49 (FVGLFFPGLQGTLLVNVCGSF), and 95–115 (EWAVANVVGSYALGFAGVLVG).

The protein belongs to the fluoride channel Fluc/FEX (TC 1.A.43) family.

It localises to the cell membrane. The enzyme catalyses fluoride(in) = fluoride(out). In terms of biological role, fluoride-specific ion channel. Important for reducing fluoride concentration in the cell, thus reducing its toxicity. The sequence is that of Fluoride-specific ion channel FluC 1 from Haloarcula marismortui (strain ATCC 43049 / DSM 3752 / JCM 8966 / VKM B-1809) (Halobacterium marismortui).